A 736-amino-acid chain; its full sequence is Probable methionine--tRNA ligase, cytoplasmic (736 aa).

The 'HIGH' region motif lies at 25–35 (PYVNNVPHLGN). Residues 346–350 (KFSKS) carry the 'KMSKS' region motif. Lys349 serves as a coordination point for ATP. The region spanning 573–680 (PEFPIDMKIA…QSIEAGSKIA (108 aa)) is the tRNA-binding domain.

This sequence belongs to the class-I aminoacyl-tRNA synthetase family.

The protein localises to the cytoplasm. The catalysed reaction is tRNA(Met) + L-methionine + ATP = L-methionyl-tRNA(Met) + AMP + diphosphate. The sequence is that of Probable methionine--tRNA ligase, cytoplasmic (metS) from Dictyostelium discoideum (Social amoeba).